We begin with the raw amino-acid sequence, 167 residues long: Transcription antitermination protein NusB (167 aa).

The protein belongs to the NusB family.

Functionally, involved in transcription antitermination. Required for transcription of ribosomal RNA (rRNA) genes. Binds specifically to the boxA antiterminator sequence of the ribosomal RNA (rrn) operons. The polypeptide is Transcription antitermination protein NusB (Nitrosomonas europaea (strain ATCC 19718 / CIP 103999 / KCTC 2705 / NBRC 14298)).